The chain runs to 211 residues: Large ribosomal subunit protein uL3 (211 aa).

Gln150 is modified (N5-methylglutamine).

Belongs to the universal ribosomal protein uL3 family. In terms of assembly, part of the 50S ribosomal subunit. Forms a cluster with proteins L14 and L19. In terms of processing, methylated by PrmB.

Its function is as follows. One of the primary rRNA binding proteins, it binds directly near the 3'-end of the 23S rRNA, where it nucleates assembly of the 50S subunit. The chain is Large ribosomal subunit protein uL3 from Pseudomonas syringae pv. tomato (strain ATCC BAA-871 / DC3000).